Reading from the N-terminus, the 675-residue chain is MEVIRYPNSPFKLHQPFPPAGDQPTAIAGLLEGLSDGLAYQTLLGVTGSGKTYTMANVIAQSGRPAIIMAHNKTLAAQLYAEMREFFPENAVEYFVSYYDYYQPEAYVPSRDLFIEKDSAINEHIEQMRLSATKNLMTRDDVIIVATVSAIYGIGDPTEYQQMVLSVKEGDTIEQRDIIATLVSMQYERGDLDFKRGSFRVRGDVIDVYPAESSENALRISLFDDEIDRLDMFDPLSGSLHQRVGRYTVFPSSHYVTPRDTVLRACESIKEELRERIEFFAREQRPVEQQRIEQRTRFDLEMLYEMGFCKGIENYSRHFSGKKEGEPPPTLMDYLPDNAIMFIDESHVTVTQIGGMYKGDASRKQNLVDYGFRLPSARDNRPLKFHEFEKVMPQTVFVSATPAKYEEEHAGQVVEQVVRPTGLVDPQIIIRPVATQVDDLMSEINDRIQKGERVLVTTLTKRMAEQLTDYYSELGIKVRYLHSDIDTVERVEIIRDLRLGLFDVLVGINLLREGLDIPEVSLVAILDADKEGFLRSHRSLIQTIGRAARNVNGVAILYADKITDSMKAAVDETERRREKQIKFNEEHGIVPQQIKKQVKDIIDGVYHEEDSGKGRRQGKNKVKVGEIHNEEDAIKEIAKLEKAMQQAARDLQFEEAAVLRDRIRNIKENLLFGAE.

Residues 32–417 (EGLSDGLAYQ…EHAGQVVEQV (386 aa)) enclose the Helicase ATP-binding domain. 45-52 (GVTGSGKT) serves as a coordination point for ATP. The Beta-hairpin motif lies at 98-121 (YYDYYQPEAYVPSRDLFIEKDSAI). In terms of domain architecture, Helicase C-terminal spans 436–602 (QVDDLMSEIN…QIKKQVKDII (167 aa)). Residues 634 to 669 (IKEIAKLEKAMQQAARDLQFEEAAVLRDRIRNIKEN) form the UVR domain.

Belongs to the UvrB family. As to quaternary structure, forms a heterotetramer with UvrA during the search for lesions. Interacts with UvrC in an incision complex.

The protein localises to the cytoplasm. Its function is as follows. The UvrABC repair system catalyzes the recognition and processing of DNA lesions. A damage recognition complex composed of 2 UvrA and 2 UvrB subunits scans DNA for abnormalities. Upon binding of the UvrA(2)B(2) complex to a putative damaged site, the DNA wraps around one UvrB monomer. DNA wrap is dependent on ATP binding by UvrB and probably causes local melting of the DNA helix, facilitating insertion of UvrB beta-hairpin between the DNA strands. Then UvrB probes one DNA strand for the presence of a lesion. If a lesion is found the UvrA subunits dissociate and the UvrB-DNA preincision complex is formed. This complex is subsequently bound by UvrC and the second UvrB is released. If no lesion is found, the DNA wraps around the other UvrB subunit that will check the other stand for damage. This chain is UvrABC system protein B, found in Neisseria gonorrhoeae.